A 162-amino-acid chain; its full sequence is Shikimate kinase (162 aa).

11–16 contacts ATP; that stretch reads GSGKSS. Ser15 contacts Mg(2+). Substrate is bound by residues Asp33, Arg57, and Gly80. Position 116 (Arg116) interacts with ATP. Arg132 is a binding site for substrate.

It belongs to the shikimate kinase family. Monomer. Mg(2+) is required as a cofactor.

Its subcellular location is the cytoplasm. The catalysed reaction is shikimate + ATP = 3-phosphoshikimate + ADP + H(+). It functions in the pathway metabolic intermediate biosynthesis; chorismate biosynthesis; chorismate from D-erythrose 4-phosphate and phosphoenolpyruvate: step 5/7. In terms of biological role, catalyzes the specific phosphorylation of the 3-hydroxyl group of shikimic acid using ATP as a cosubstrate. The sequence is that of Shikimate kinase from Helicobacter pylori (strain G27).